A 388-amino-acid polypeptide reads, in one-letter code: Chalcone synthase DIV (388 aa).

Cys-164 is an active-site residue.

This sequence belongs to the thiolase-like superfamily. Chalcone/stilbene synthases family.

The enzyme catalyses (E)-4-coumaroyl-CoA + 3 malonyl-CoA + 3 H(+) = 2',4,4',6'-tetrahydroxychalcone + 3 CO2 + 4 CoA. It participates in secondary metabolite biosynthesis; flavonoid biosynthesis. Functionally, the primary product of this enzyme is 4,2',4',6'-tetrahydroxychalcone (also termed naringenin-chalcone or chalcone) which can under specific conditions spontaneously isomerize into naringenin. The polypeptide is Chalcone synthase DIV (CHS-DIV) (Ipomoea batatas (Sweet potato)).